A 1452-amino-acid chain; its full sequence is ABC-type transporter adrC (1452 aa).

Residues 1-38 (MAPEEGDQAMSHEDKAACSSLNTTSSTELFDGAPSSEN) form a disordered region. The span at 19–28 (SSLNTTSSTE) shows a compositional bias: polar residues. The ABC transporter 1 domain occupies 116 to 378 (KRLMSIVGNK…FETMGWKRPP (263 aa)). Transmembrane regions (helical) follow at residues 487-507 (IPAL…IGSL), 524-544 (VLFL…TTLY), 569-589 (VIVD…IVYF), 598-618 (SHFF…ATIF), 631-651 (AMAL…FTVP), and 738-758 (GILV…TELI). An ABC transporter 2 domain is found at 813–1055 (FSWKGLSYDI…TVLEYLEDKG (243 aa)). 849–856 (GVSGAGKT) lines the ATP pocket. The next 7 helical transmembrane spans lie at 1149 to 1169 (YILA…FSFW), 1181 to 1201 (VLFS…QIMP), 1224 to 1244 (VFIL…GICT), 1264 to 1284 (LVLL…QLVV), 1287 to 1307 (VPSV…CLLF), 1322 to 1344 (IFMN…ALHG), and 1415 to 1435 (FGIF…LYYL).

This sequence belongs to the ABC transporter superfamily. ABCG family. PDR (TC 3.A.1.205) subfamily.

It is found in the membrane. Its function is as follows. ABC-type transporter; part of the gene cluster that mediates the biosynthesis of the meroterpenoid compound andrastin A, a promising antitumoral compound. Is required for the production of andrastin A but does not have a significant role in its secretion. The sequence is that of ABC-type transporter adrC from Penicillium roqueforti.